Reading from the N-terminus, the 228-residue chain is Translin (228 aa).

The tract at residues 86–90 (RFHEH) is DNA/RNA binding. Positions 177–198 (LDSGFRLLNLKNDSLRKRYDGL) are leucine-zipper. The residue at position 187 (Lys187) is an N6-acetyllysine. Ser190 is modified (phosphoserine). The residue at position 199 (Lys199) is an N6-acetyllysine.

It belongs to the translin family. In terms of assembly, ring-shaped heterooctamer of six TSN and two TSNAX subunits, DNA/RNA binding occurs inside the ring.

The protein resides in the cytoplasm. It localises to the nucleus. Functionally, DNA-binding protein that specifically recognizes consensus sequences at the breakpoint junctions in chromosomal translocations, mostly involving immunoglobulin (Ig)/T-cell receptor gene segments. Seems to recognize single-stranded DNA ends generated by staggered breaks occurring at recombination hot spots. Its function is as follows. Exhibits both single-stranded and double-stranded endoribonuclease activity. May act as an activator of RNA-induced silencing complex (RISC) by facilitating endonucleolytic cleavage of the siRNA passenger strand. In Cricetulus griseus (Chinese hamster), this protein is Translin (TSN).